The primary structure comprises 95 residues: Large ribosomal subunit protein uL23 (95 aa).

The protein belongs to the universal ribosomal protein uL23 family. In terms of assembly, part of the 50S ribosomal subunit. Contacts protein L29, and trigger factor when it is bound to the ribosome.

Its function is as follows. One of the early assembly proteins it binds 23S rRNA. One of the proteins that surrounds the polypeptide exit tunnel on the outside of the ribosome. Forms the main docking site for trigger factor binding to the ribosome. This is Large ribosomal subunit protein uL23 from Rubrobacter xylanophilus (strain DSM 9941 / JCM 11954 / NBRC 16129 / PRD-1).